We begin with the raw amino-acid sequence, 3546 residues long: Ubiquitin carboxyl-terminal hydrolase 34 (3546 aa).

Residues S352, S486, S487, and S490 each carry the phosphoserine modification. Disordered stretches follow at residues 502 to 535 (KEEE…SGGS), 550 to 679 (VQQR…VFNT), and 1459 to 1478 (TGSY…DQVE). A compositionally biased stretch (low complexity) spans 511–524 (APSPWSPAASPQSS). Composition is skewed to polar residues over residues 525-534 (DNSDTHQSGG) and 560-570 (SMQGSSDETAN). Positions 571-590 (SGEDGSSGPGSSSGHSDGSS) are enriched in low complexity. A compositionally biased stretch (polar residues) spans 591–609 (NEVNSSHASQSAGSPGSEV). Over residues 610 to 627 (QSEDIADIEALKEEDEDD) the composition is skewed to acidic residues. S649 carries the phosphoserine modification. Residues 659–671 (QGMSERNGTSSGT) show a composition bias toward polar residues. Residues 1467–1477 (PDSDDSSEDQV) show a composition bias toward acidic residues. S1469 carries the phosphoserine modification. The 346-residue stretch at 1894 to 2239 (VGLTNLGATC…SAYMLFYKRM (346 aa)) folds into the USP domain. Residue C1903 is the Nucleophile of the active site. The active-site Proton acceptor is the H2164. S2488 is subject to Phosphoserine. Residues 3331–3443 (NSLQEQEAKE…HAEEQSNNGR (113 aa)) are disordered. Over residues 3336-3347 (QEAKERKTKDDE) the composition is skewed to basic and acidic residues. S3358 and S3359 each carry phosphoserine. T3381 is modified (phosphothreonine). Phosphoserine occurs at positions 3386 and 3406. Positions 3421 to 3432 (SSFSEDMSNIRS) are enriched in polar residues. Basic and acidic residues predominate over residues 3433–3443 (QHAEEQSNNGR). S3503 carries the phosphoserine modification.

Belongs to the peptidase C19 family. As to quaternary structure, interacts with AXIN1 and AXIN2. Expressed in brain at low level.

The catalysed reaction is Thiol-dependent hydrolysis of ester, thioester, amide, peptide and isopeptide bonds formed by the C-terminal Gly of ubiquitin (a 76-residue protein attached to proteins as an intracellular targeting signal).. In terms of biological role, ubiquitin hydrolase that can remove conjugated ubiquitin from AXIN1 and AXIN2, thereby acting as a regulator of Wnt signaling pathway. Acts as an activator of the Wnt signaling pathway downstream of the beta-catenin destruction complex by deubiquitinating and stabilizing AXIN1 and AXIN2, leading to promote nuclear accumulation of AXIN1 and AXIN2 and positively regulate beta-catenin (CTNBB1)-mediated transcription. Recognizes and hydrolyzes the peptide bond at the C-terminal Gly of ubiquitin. Involved in the processing of poly-ubiquitin precursors as well as that of ubiquitinated proteins. This Homo sapiens (Human) protein is Ubiquitin carboxyl-terminal hydrolase 34 (USP34).